The chain runs to 447 residues: MAGYEVNFDGLVGLTHHYAGLSFGNEASTTHQNRTSNPRLAAKQGLLKMKALADLGYKQGVLPPQERPAIGVLRKLGFSGSDEQVLSDVARNAPRLLSAVSSASSMWTANAATVSPSADSADGRVHFTVANLHNKFHRAIEAETTAVLLPAVFNNHRHFVHHDALPSVTLLGDEGAANHNRLGGEYDSPAIQMFVYGRQGMESGAVPGRYPARQTREASQAVARLHQLDPKRTVFVQQNPAVIDQGVFHNDVIAVSNRNVLFHHELAFLSSTQVMDDIRCKMAGLEQQLVNIEVPEAEVSVADAVSTYLFNSQLLHKANGKMLLVIPQESQDNPSVWRYLSELVSGDGPIDELRVFDLRESMRNGGGPACLRLRVVLNDAELQAVNSRVMLTPALFVTLNNWVDQHYRDHLQFKDLADPHLLQEGRQALDELTRILNLGPVYPFQRN.

Substrate-binding positions include Ala-19–Ser-28, Asn-110, and His-137–Arg-138. Glu-174 is a catalytic residue. Position 213 (Arg-213) interacts with substrate. Residue His-249 is part of the active site. Positions 251 and 364 each coordinate substrate. Cys-370 acts as the Nucleophile in catalysis.

This sequence belongs to the succinylarginine dihydrolase family. In terms of assembly, homodimer.

It catalyses the reaction N(2)-succinyl-L-arginine + 2 H2O + 2 H(+) = N(2)-succinyl-L-ornithine + 2 NH4(+) + CO2. The protein operates within amino-acid degradation; L-arginine degradation via AST pathway; L-glutamate and succinate from L-arginine: step 2/5. Its function is as follows. Catalyzes the hydrolysis of N(2)-succinylarginine into N(2)-succinylornithine, ammonia and CO(2). This is N-succinylarginine dihydrolase from Yersinia pestis bv. Antiqua (strain Antiqua).